A 211-amino-acid polypeptide reads, in one-letter code: Ribosomal RNA small subunit methyltransferase G (211 aa).

S-adenosyl-L-methionine contacts are provided by residues G72, F77, I125–E126, and R141.

It belongs to the methyltransferase superfamily. RNA methyltransferase RsmG family.

It localises to the cytoplasm. It catalyses the reaction guanosine(527) in 16S rRNA + S-adenosyl-L-methionine = N(7)-methylguanosine(527) in 16S rRNA + S-adenosyl-L-homocysteine. Its function is as follows. Specifically methylates the N7 position of guanine in position 527 of 16S rRNA. The chain is Ribosomal RNA small subunit methyltransferase G from Allorhizobium ampelinum (strain ATCC BAA-846 / DSM 112012 / S4) (Agrobacterium vitis (strain S4)).